A 341-amino-acid polypeptide reads, in one-letter code: Probable 2' cyclic ADP-D-ribose synthase TcpO (341 aa).

Positions 204 to 336 (KEYDIFVSHS…EIIHEILERI (133 aa)) constitute a TIR domain. NAD(+) contacts are provided by residues 213–214 (SS) and Lys243. Residue Glu279 is part of the active site.

It carries out the reaction NAD(+) + H2O = ADP-D-ribose + nicotinamide + H(+). It catalyses the reaction NAD(+) = 2'cADPR + nicotinamide + H(+). Its function is as follows. NAD(+) hydrolase (NADase) that catalyzes cleavage of NAD(+) into ADP-D-ribose (ADPR) and nicotinamide. In addition to ADPR, also generates a cyclization variant of cyclic ADPR (cADPR), termed v-cADPR (probably 2'cADPR). In Methanobrevibacter olleyae, this protein is Probable 2' cyclic ADP-D-ribose synthase TcpO.